Consider the following 292-residue polypeptide: Inositol monophosphatase 2 (292 aa).

Residues Glu-75, Asp-94, Ile-96, Asp-97, and Asp-231 each contribute to the Mg(2+) site. Glu-75 provides a ligand contact to substrate. Residues Ile-96–Thr-99 and Asp-231 contribute to the substrate site.

This sequence belongs to the inositol monophosphatase superfamily. The cofactor is Mg(2+).

It carries out the reaction a myo-inositol phosphate + H2O = myo-inositol + phosphate. The protein operates within polyol metabolism; myo-inositol biosynthesis; myo-inositol from D-glucose 6-phosphate: step 2/2. Inhibited by Li(+) and Na(+). Responsible for the provision of inositol required for synthesis of phosphatidylinositol and polyphosphoinositides and involved in the inositol cycle of calcium signaling. The chain is Inositol monophosphatase 2 (INM2) from Saccharomyces cerevisiae (strain ATCC 204508 / S288c) (Baker's yeast).